A 416-amino-acid chain; its full sequence is Enterobactin exporter EntS (416 aa).

The Cytoplasmic segment spans residues 1–21; the sequence is MNKQSWLLNLSLLKTHPAFRA. The helical transmembrane segment at 22–42 threads the bilayer; the sequence is VFLARFISIVSLGLLGVAVPV. The Periplasmic portion of the chain corresponds to 43-55; the sequence is QIQMMTHSTWQVG. The chain crosses the membrane as a helical span at residues 56–76; the sequence is LSVTLTGGAMFVGLMVGGVLA. Residues 77–83 lie on the Cytoplasmic side of the membrane; the sequence is DRYERKK. The helical transmembrane segment at 84-104 threads the bilayer; sequence VILLARGTCGIGFIGLCLNAL. The Periplasmic portion of the chain corresponds to 105–109; it reads LPEPS. The chain crosses the membrane as a helical span at residues 110-130; that stretch reads LLAIYLLGLWDGFFASLGVTA. The Cytoplasmic portion of the chain corresponds to 131–156; the sequence is LLAATPALVGRENLMQAGAITMLTVR. The helical transmembrane segment at 157 to 177 threads the bilayer; the sequence is LGSVNSPMIGGLLLAIGGVAW. Position 178 (N178) is a topological domain, periplasmic. The helical transmembrane segment at 179-199 threads the bilayer; the sequence is YGLAAAGTFITLLPLLSLPAL. Over 200-218 the chain is Cytoplasmic; that stretch reads PPPPQPREHPLKSLLAGFR. Residues 219–239 traverse the membrane as a helical segment; sequence FLLASPLVGGIALLGGLLTMA. The Periplasmic portion of the chain corresponds to 240 to 256; the sequence is SAVRVLYPALADNWQMS. The chain crosses the membrane as a helical span at residues 257–277; that stretch reads AAQIGFLYAAIPLGAAIGALT. Topologically, residues 278-287 are cytoplasmic; sequence SGKLAHSARP. Residues 288–307 form a helical membrane-spanning segment; sequence GLLMLLSTLGSFLAIGLFGL. The Periplasmic portion of the chain corresponds to 308-313; it reads MPMWIL. A helical transmembrane segment spans residues 314–336; that stretch reads GVVCLALFGWLSAVSSLLQYTML. At 337-356 the chain is on the cytoplasmic side; the sequence is QTQTPEVMLGRINGLWTAQN. Residues 357–377 form a helical membrane-spanning segment; it reads VTGDAIGAALLGGLGAMMTPV. Position 378 (A378) is a topological domain, periplasmic. The chain crosses the membrane as a helical span at residues 379–399; the sequence is SASASGFGLLIIGVLLLLVLV. Over 400–416 the chain is Cytoplasmic; it reads ELRHFRQTPPQVTASDS.

It belongs to the major facilitator superfamily. EntS (TC 2.A.1.38) family.

Its subcellular location is the cell inner membrane. Functionally, component of an export pathway for enterobactin. The polypeptide is Enterobactin exporter EntS (Shigella dysenteriae serotype 1 (strain Sd197)).